The chain runs to 179 residues: ATP synthase subunit b, chloroplastic (179 aa).

A helical transmembrane segment spans residues 28–46; sequence LLNILALVAILVYTGKDFL.

This sequence belongs to the ATPase B chain family. In terms of assembly, F-type ATPases have 2 components, F(1) - the catalytic core - and F(0) - the membrane proton channel. F(1) has five subunits: alpha(3), beta(3), gamma(1), delta(1), epsilon(1). F(0) has four main subunits: a(1), b(1), b'(1) and c(10-14). The alpha and beta chains form an alternating ring which encloses part of the gamma chain. F(1) is attached to F(0) by a central stalk formed by the gamma and epsilon chains, while a peripheral stalk is formed by the delta, b and b' chains.

The protein resides in the plastid. It localises to the chloroplast thylakoid membrane. Its function is as follows. F(1)F(0) ATP synthase produces ATP from ADP in the presence of a proton or sodium gradient. F-type ATPases consist of two structural domains, F(1) containing the extramembraneous catalytic core and F(0) containing the membrane proton channel, linked together by a central stalk and a peripheral stalk. During catalysis, ATP synthesis in the catalytic domain of F(1) is coupled via a rotary mechanism of the central stalk subunits to proton translocation. In terms of biological role, component of the F(0) channel, it forms part of the peripheral stalk, linking F(1) to F(0). This chain is ATP synthase subunit b, chloroplastic, found in Thalassiosira pseudonana (Marine diatom).